Reading from the N-terminus, the 297-residue chain is Inactive beta selinene synthase (297 aa).

Belongs to the terpene synthase family. As to quaternary structure, monomer.

Its subcellular location is the cytoplasm. Its function is as follows. Inactive selinene synthase. In Zea mays (Maize), this protein is Inactive beta selinene synthase.